Here is a 410-residue protein sequence, read N- to C-terminus: Single Ig IL-1-related receptor (410 aa).

Over methionine 1–histidine 118 the chain is Extracellular. Residues proline 9–threonine 109 form the Ig-like C2-type domain. 4 N-linked (GlcNAc...) asparagine glycosylation sites follow: asparagine 31, asparagine 73, asparagine 86, and asparagine 102. Residues cysteine 32 and cysteine 98 are joined by a disulfide bond. Residues valine 119–tyrosine 139 form a helical; Signal-anchor for type III membrane protein membrane-spanning segment. Over valine 140–methionine 410 the chain is Cytoplasmic. One can recognise a TIR domain in the interval lysine 163–leucine 307. The disordered stretch occupies residues glutamate 340–leucine 390. Serine 383 bears the Phosphoserine mark.

This sequence belongs to the interleukin-1 receptor family. As to quaternary structure, interacts with IL1R1, IRAK1, TLR4, TLR5, TLR9 and TRAF6. Upon IL-1 stimulation found in a complex at least composed of IL1R1, SIGIRR, MYD88, IRAK1 and TRAF6. Upon stimulation with LPC found in a complex at least composed of TLR4, SIG1IR, MYD88, IRAK1 and TRAF6. Interacts with PALM3. Mainly expressed in epithelial tissues such as kidney, lung and gut.

Its subcellular location is the membrane. Acts as a negative regulator of the Toll-like and IL-1R receptor signaling pathways. Attenuates the recruitment of receptor-proximal signaling components to the TLR4 receptor, probably through an TIR-TIR domain interaction with TLR4. Through its extracellular domain interferes with the heterodimerization of Il1R1 and IL1RAP. This Homo sapiens (Human) protein is Single Ig IL-1-related receptor (SIGIRR).